We begin with the raw amino-acid sequence, 286 residues long: Small ribosomal subunit protein uS2 (286 aa).

The interval 231–286 (ERAQAEAKAAAGDNDAPVSSEGESTEVASDAASTASETTATSSDESAAESSEAESK) is disordered. Low complexity predominate over residues 255–280 (TEVASDAASTASETTATSSDESAAES).

This sequence belongs to the universal ribosomal protein uS2 family.

This chain is Small ribosomal subunit protein uS2, found in Corynebacterium kroppenstedtii (strain DSM 44385 / JCM 11950 / CIP 105744 / CCUG 35717).